Reading from the N-terminus, the 115-residue chain is MGTSTAKEAHALIASLRSAYSATPTKLKIIDLYVVYAILTAVVQVVYMAIVGSFPFNAFLSGVLSCTGTAVLAVCLRMQVNKENREFKDLPPERAFADFVLCNLVLHLVIMNFLG.

Topologically, residues 1 to 31 (MGTSTAKEAHALIASLRSAYSATPTKLKIID) are cytoplasmic. The helical transmembrane segment at 32–52 (LYVVYAILTAVVQVVYMAIVG) threads the bilayer. At 53 to 55 (SFP) the chain is on the lumenal side. A helical transmembrane segment spans residues 56–76 (FNAFLSGVLSCTGTAVLAVCL). Topologically, residues 77 to 94 (RMQVNKENREFKDLPPER) are cytoplasmic. Residues 95 to 115 (AFADFVLCNLVLHLVIMNFLG) traverse the membrane as a helical segment.

The protein belongs to the DAD/OST2 family. In terms of assembly, component of the oligosaccharyltransferase (OST) complex.

Its subcellular location is the endoplasmic reticulum membrane. It participates in protein modification; protein glycosylation. Its function is as follows. Subunit of the oligosaccharyl transferase (OST) complex that catalyzes the initial transfer of a defined glycan (Glc(3)Man(9)GlcNAc(2) in eukaryotes) from the lipid carrier dolichol-pyrophosphate to an asparagine residue within an Asn-X-Ser/Thr consensus motif in nascent polypeptide chains, the first step in protein N-glycosylation. N-glycosylation occurs cotranslationally and the complex associates with the Sec61 complex at the channel-forming translocon complex that mediates protein translocation across the endoplasmic reticulum (ER). All subunits are required for a maximal enzyme activity. The polypeptide is Dolichyl-diphosphooligosaccharide--protein glycosyltransferase subunit DAD1 (DAD1) (Picea mariana (Black spruce)).